The sequence spans 217 residues: Thymidylate kinase (217 aa).

11–18 (GLEGAGKS) lines the ATP pocket.

It belongs to the thymidylate kinase family.

It carries out the reaction dTMP + ATP = dTDP + ADP. Phosphorylation of dTMP to form dTDP in both de novo and salvage pathways of dTTP synthesis. The sequence is that of Thymidylate kinase from Alkalilimnicola ehrlichii (strain ATCC BAA-1101 / DSM 17681 / MLHE-1).